Reading from the N-terminus, the 164-residue chain is Probable calcium-binding protein CML17 (164 aa).

EF-hand domains follow at residues 4-39 (DQQAELRRVFELFDRDGDGRITREELTESLERLGMP), 40-75 (VHREELAATIARIDANGDGCVDMDEFTQLYETVMRV), 88-123 (VDEASMREAFDVFDRNGDGFITVDELGAVLASLGIK), and 126-161 (RTAEDCGRMIGQVDRDGDGRVDFLEFKQMMRGGAFA). Ca(2+) is bound by residues D17, D19, D21, R23, E28, D53, N55, D57, C59, E64, D101, N103, D105, E112, D139, D141, D143, R145, and E150.

Its function is as follows. Potential calcium sensor. This is Probable calcium-binding protein CML17 (CML17) from Oryza sativa subsp. japonica (Rice).